The primary structure comprises 291 residues: Flap endonuclease (291 aa).

The helical arch stretch occupies residues tyrosine 82–lysine 116. Position 83 (lysine 83) interacts with DNA. Positions 130, 153, 155, and 201 each coordinate Mg(2+). The interval aspartate 188–phenylalanine 224 is DNA-binding; H3TH. One can recognise a 5'-3' exonuclease domain in the interval glutamate 190–proline 263. The K(+) site is built by valine 209 and isoleucine 212.

Mg(2+) serves as cofactor. It depends on K(+) as a cofactor.

The catalysed reaction is Exonucleolytic cleavage in the 5'- to 3'-direction to yield nucleoside 5'-phosphates.. Its activity is regulated as follows. Inhibited by p-hydroxymercuribenzoate (PHMB). Functionally, catalyzes both the 5'-exonucleolytic and structure-specific endonucleolytic hydrolysis of DNA branched nucleic acid molecules and probably plays a role in viral genome replication. Active on flap (branched duplex DNA containing a free single-stranded 5'-end), 5'overhangs and pseudo-Y structures. The substrates require a free, single-stranded 5' end, with endonucleolytic hydrolysis occurring at the junction of double- and single-stranded DNA. This function may be used for example to trim such branched molecules generated by Okazaki fragments synthesis during replication. The sequence is that of Flap endonuclease (D15) from Escherichia phage T5 (Enterobacteria phage T5).